Consider the following 118-residue polypeptide: NLYQFKNMIHCTVPSRPWWHFADYGCYCGRGGKGTAVDDLDRCCQVHDNCYGEAEKLGCWPYLTLYKYECSQGKLTCSGGNNKCEAAVCNCDLVAANCFAGAPYIDANYNVNLKERCQ.

7 disulfides stabilise this stretch: Cys-11–Cys-70, Cys-26–Cys-117, Cys-28–Cys-44, Cys-43–Cys-98, Cys-50–Cys-91, Cys-59–Cys-84, and Cys-77–Cys-89. Tyr-27, Gly-29, and Gly-31 together coordinate Ca(2+). His-47 is a catalytic residue. Asp-48 provides a ligand contact to Ca(2+). Asp-92 is an active-site residue.

It belongs to the phospholipase A2 family. Group I subfamily. D49 sub-subfamily. Ca(2+) serves as cofactor. Expressed by the venom gland.

The protein resides in the secreted. It catalyses the reaction a 1,2-diacyl-sn-glycero-3-phosphocholine + H2O = a 1-acyl-sn-glycero-3-phosphocholine + a fatty acid + H(+). In terms of biological role, snake venom phospholipase A2 (PLA2) that causes myonecrosis when injected intramuscularly, shows indirect hemolytic activity, abolishes twitches evoked by indirect stimulation earlier than those by direct stimulation (in the mouse phrenic nerve-diaphragm preparation) but does not produce complete neuromuscular block (up to 30 ug/ml) (in the chick biventer cervicis nerve-muscle preparation). PLA2 catalyzes the calcium-dependent hydrolysis of the 2-acyl groups in 3-sn-phosphoglycerides. In Naja mossambica (Mozambique spitting cobra), this protein is Acidic phospholipase A2 CM-I.